Reading from the N-terminus, the 412-residue chain is Alpha-2,8-sialyltransferase 8E (412 aa).

The Cytoplasmic segment spans residues 1 to 16 (MRYADPSANRDLLGNR). Residues 17–37 (TLLFIFICAFALVTLLQQILY) form a helical; Signal-anchor for type II membrane protein membrane-spanning segment. Residues 38-412 (SKSYIKRGFQ…RVHTGTCNCC (375 aa)) lie on the Lumenal side of the membrane. N-linked (GlcNAc...) asparagine glycans are attached at residues asparagine 58, asparagine 64, asparagine 73, and asparagine 92. 2 disulfide bridges follow: cysteine 200/cysteine 349 and cysteine 214/cysteine 409. Substrate-binding positions include asparagine 228 and 250-252 (NPS). N-linked (GlcNAc...) asparagine glycosylation is present at asparagine 277. 336-338 (STG) contacts substrate. The Proton donor/acceptor role is filled by histidine 384.

The protein belongs to the glycosyltransferase 29 family. Highly expressed in brain. Expressed at low levels in other tissues, including liver, testis, lung, placenta and spleen.

Its subcellular location is the golgi apparatus membrane. The enzyme catalyses a ganglioside GT1b (d18:1(4E)) + CMP-N-acetyl-beta-neuraminate = a ganglioside GQ1b (d18:1(4E)) + CMP + H(+). The catalysed reaction is a ganglioside GD3 (d18:1(4E)) + CMP-N-acetyl-beta-neuraminate = a ganglioside GT3 (d18:1(4E)) + CMP + H(+). It carries out the reaction a ganglioside GD1a (d18:1(4E)) + CMP-N-acetyl-beta-neuraminate = a ganglioside GT1a (d18:1(4E)) + CMP + H(+). It catalyses the reaction a ganglioside GM1b (d18:1(4E)) + CMP-N-acetyl-beta-neuraminate = a ganglioside GD1c (d18:1(4E)) + CMP + H(+). The enzyme catalyses a ganglioside GQ1c (d18:1(4E)) + CMP-N-acetyl-beta-neuraminate = a ganglioside GP1c (d18:1(4E)) + CMP + H(+). Its pathway is protein modification; protein glycosylation. Functionally, involved in the synthesis of gangliosides GD1c, GT1a, GQ1b, GP1c and GT3 from GD1a, GT1b, GM1b and GD3 respectively. The polypeptide is Alpha-2,8-sialyltransferase 8E (Mus musculus (Mouse)).